The primary structure comprises 785 residues: Endonuclease MutS2 (785 aa).

Gly-334–Thr-341 is a binding site for ATP. The 76-residue stretch at Leu-710 to Lys-785 folds into the Smr domain.

The protein belongs to the DNA mismatch repair MutS family. MutS2 subfamily. As to quaternary structure, homodimer. Binds to stalled ribosomes, contacting rRNA.

Endonuclease that is involved in the suppression of homologous recombination and thus may have a key role in the control of bacterial genetic diversity. Its function is as follows. Acts as a ribosome collision sensor, splitting the ribosome into its 2 subunits. Detects stalled/collided 70S ribosomes which it binds and splits by an ATP-hydrolysis driven conformational change. Acts upstream of the ribosome quality control system (RQC), a ribosome-associated complex that mediates the extraction of incompletely synthesized nascent chains from stalled ribosomes and their subsequent degradation. Probably generates substrates for RQC. The protein is Endonuclease MutS2 of Brevibacillus brevis (strain 47 / JCM 6285 / NBRC 100599).